The primary structure comprises 372 residues: 3,5-dihydroxyphenylacetyl-CoA synthase (372 aa).

The active site involves Cys160.

Belongs to the thiolase-like superfamily. Chalcone/stilbene synthases family.

It catalyses the reaction 4 malonyl-CoA + 4 H(+) = (3,5-dihydroxyphenyl)acetyl-CoA + 4 CO2 + 3 CoA + H2O. It participates in antibiotic biosynthesis. Functionally, involved in the biosynthesis of the nonproteinogenic amino acid monomer (S)-3,5-dihydroxyphenylglycine (Dpg) responsible of the production of balhimycin antibiotic. Catalyzes the Claisen condensation of four molecules of malonyl-CoA to yield 3,5-dihydroxyphenylacetyl-CoA (DPA-CoA) and three free coenzyme A (CoA). DpgA requires the presence of the dehydratases DpgB and DpgD to facilitate the aromatization of the DPA-S-DgpA or DPA-S-CoA intermediate. In Amycolatopsis balhimycina, this protein is 3,5-dihydroxyphenylacetyl-CoA synthase.